Here is a 245-residue protein sequence, read N- to C-terminus: tRNA1(Val) (adenine(37)-N6)-methyltransferase (245 aa).

The protein belongs to the methyltransferase superfamily. tRNA (adenine-N(6)-)-methyltransferase family.

It is found in the cytoplasm. It catalyses the reaction adenosine(37) in tRNA1(Val) + S-adenosyl-L-methionine = N(6)-methyladenosine(37) in tRNA1(Val) + S-adenosyl-L-homocysteine + H(+). In terms of biological role, specifically methylates the adenine in position 37 of tRNA(1)(Val) (anticodon cmo5UAC). The polypeptide is tRNA1(Val) (adenine(37)-N6)-methyltransferase (Salmonella typhi).